The following is a 686-amino-acid chain: MAM domain-containing protein 2 (686 aa).

The first 18 residues, 1-18 (MLLRGVLLALQALQLAGA), serve as a signal peptide directing secretion. MAM domains follow at residues 24–169 (GSCA…YCIE), 168–329 (IECD…HCQN), 340–498 (ASCN…SCSS), and 507–666 (GECT…PCGE). N-linked (GlcNAc...) asparagine glycosylation is found at asparagine 134 and asparagine 329. Disordered regions lie at residues 521–543 (EKRN…TGPK) and 665–686 (GEME…EIEY). An N-linked (GlcNAc...) asparagine glycan is attached at asparagine 524.

In terms of processing, O-glycosylated.

The protein resides in the secreted. It is found in the extracellular space. Its subcellular location is the extracellular matrix. In Homo sapiens (Human), this protein is MAM domain-containing protein 2 (MAMDC2).